The primary structure comprises 570 residues: Urease subunit alpha (570 aa).

Positions 131 to 570 (GGMDSHIHFI…LPMAQRYFLF (440 aa)) constitute a Urease domain. Histidine 136, histidine 138, and lysine 219 together coordinate Ni(2+). Lysine 219 is subject to N6-carboxylysine. Residue histidine 221 participates in substrate binding. Histidine 248 and histidine 274 together coordinate Ni(2+). The active-site Proton donor is the histidine 322. Residue aspartate 362 coordinates Ni(2+).

The protein belongs to the metallo-dependent hydrolases superfamily. Urease alpha subunit family. As to quaternary structure, heterotrimer of UreA (gamma), UreB (beta) and UreC (alpha) subunits. Three heterotrimers associate to form the active enzyme. Requires Ni cation as cofactor. Carboxylation allows a single lysine to coordinate two nickel ions.

The protein resides in the cytoplasm. The catalysed reaction is urea + 2 H2O + H(+) = hydrogencarbonate + 2 NH4(+). The protein operates within nitrogen metabolism; urea degradation; CO(2) and NH(3) from urea (urease route): step 1/1. The chain is Urease subunit alpha from Rhizobium leguminosarum bv. trifolii (strain WSM2304).